A 152-amino-acid polypeptide reads, in one-letter code: FNPCPYSDDTVKMIILTEQNKKQDFYTLDTIGEHNQFNKLTAKSQVVFIVWQTGIGDAITARAGYIFLLDSGLAMLVDKYQMAPVASDIKLCNAGCYCKPTYVISVKKAIQFAWEHKCVGIRCSDPGVPTDGLSGRPHYGETLHKVRSYNGK.

Expressed by the venom gland.

The protein resides in the secreted. The catalysed reaction is a 1-acyl-sn-glycero-3-phosphocholine + H2O = sn-glycerol 3-phosphocholine + a fatty acid + H(+). Its function is as follows. Neurotoxin of presynaptic effect which degrades lysophospholipids. The sequence is that of Orientotoxin-1 from Vespa orientalis (Oriental hornet).